We begin with the raw amino-acid sequence, 638 residues long: 1-deoxy-D-xylulose-5-phosphate synthase (638 aa).

Residues H78 and 119 to 121 (GHS) each bind thiamine diphosphate. Position 151 (D151) interacts with Mg(2+). Thiamine diphosphate-binding positions include 152–153 (GA), N180, Y289, and E371. N180 contributes to the Mg(2+) binding site.

The protein belongs to the transketolase family. DXPS subfamily. As to quaternary structure, homodimer. Mg(2+) serves as cofactor. Requires thiamine diphosphate as cofactor.

The enzyme catalyses D-glyceraldehyde 3-phosphate + pyruvate + H(+) = 1-deoxy-D-xylulose 5-phosphate + CO2. Its pathway is metabolic intermediate biosynthesis; 1-deoxy-D-xylulose 5-phosphate biosynthesis; 1-deoxy-D-xylulose 5-phosphate from D-glyceraldehyde 3-phosphate and pyruvate: step 1/1. Catalyzes the acyloin condensation reaction between C atoms 2 and 3 of pyruvate and glyceraldehyde 3-phosphate to yield 1-deoxy-D-xylulose-5-phosphate (DXP). This Bartonella bacilliformis (strain ATCC 35685 / KC583 / Herrer 020/F12,63) protein is 1-deoxy-D-xylulose-5-phosphate synthase.